The primary structure comprises 765 residues: Probable serine/threonine-protein kinase DDB_G0271402 (765 aa).

The Protein kinase domain maps to 35 to 328 (LEFGQEIGKG…KEITERLKSL (294 aa)). ATP contacts are provided by residues 41–49 (IGKGAYGKI) and K62. The Proton acceptor role is filled by D192. Disordered stretches follow at residues 371-393 (IVHN…NNSN), 443-477 (SMGD…KIIN), 491-527 (SSDL…NNNS), 545-620 (PIQI…QQYQ), 654-684 (PLNI…HHHL), 699-738 (IISS…PTNI), and 746-765 (ASNS…TVQS). The segment covering 446–458 (DESDLDSDDEDDS) has biased composition (acidic residues). Low complexity-rich tracts occupy residues 459-470 (YTSSASSSRCNS), 499-527 (NGNN…NNNS), 562-605 (PPTS…PKSN), 662-678 (NNNN…GNVN), and 699-720 (IISS…SLTS).

It belongs to the protein kinase superfamily. TKL Ser/Thr protein kinase family.

The catalysed reaction is L-seryl-[protein] + ATP = O-phospho-L-seryl-[protein] + ADP + H(+). The enzyme catalyses L-threonyl-[protein] + ATP = O-phospho-L-threonyl-[protein] + ADP + H(+). This chain is Probable serine/threonine-protein kinase DDB_G0271402, found in Dictyostelium discoideum (Social amoeba).